Reading from the N-terminus, the 152-residue chain is Transcriptional repressor NrdR (152 aa).

A zinc finger spans residues 3-34 (CPSCQHNGTRVLDSRPVDDGKSIRRRRECESC). An ATP-cone domain is found at 49-139 (LIVVKKEGVR…VYRQFKDINV (91 aa)).

This sequence belongs to the NrdR family. Zn(2+) serves as cofactor.

Functionally, negatively regulates transcription of bacterial ribonucleotide reductase nrd genes and operons by binding to NrdR-boxes. The sequence is that of Transcriptional repressor NrdR from Bacillus subtilis (strain 168).